We begin with the raw amino-acid sequence, 449 residues long: Glutamyl-tRNA reductase (449 aa).

Substrate-binding positions include 49–52, Ser109, 114–116, and Gln120; these read TCNR and ETQ. Cys50 acts as the Nucleophile in catalysis. 189 to 194 is a binding site for NADP(+); that stretch reads GAGKMS. The interval 427–449 is disordered; that stretch reads NFTHPREEMEESDEKRSYCGESR.

This sequence belongs to the glutamyl-tRNA reductase family. Homodimer.

It catalyses the reaction (S)-4-amino-5-oxopentanoate + tRNA(Glu) + NADP(+) = L-glutamyl-tRNA(Glu) + NADPH + H(+). Its pathway is porphyrin-containing compound metabolism; protoporphyrin-IX biosynthesis; 5-aminolevulinate from L-glutamyl-tRNA(Glu): step 1/2. In terms of biological role, catalyzes the NADPH-dependent reduction of glutamyl-tRNA(Glu) to glutamate 1-semialdehyde (GSA). In Carboxydothermus hydrogenoformans (strain ATCC BAA-161 / DSM 6008 / Z-2901), this protein is Glutamyl-tRNA reductase.